We begin with the raw amino-acid sequence, 369 residues long: Flagellar P-ring protein (369 aa).

An N-terminal signal peptide occupies residues 1 to 22 (MIKLKQLIAATLLLSTAFGVHA).

Belongs to the FlgI family. As to quaternary structure, the basal body constitutes a major portion of the flagellar organelle and consists of four rings (L,P,S, and M) mounted on a central rod.

The protein localises to the periplasm. Its subcellular location is the bacterial flagellum basal body. Its function is as follows. Assembles around the rod to form the L-ring and probably protects the motor/basal body from shearing forces during rotation. The sequence is that of Flagellar P-ring protein from Pseudomonas syringae pv. syringae (strain B728a).